A 413-amino-acid chain; its full sequence is Peptidase T (413 aa).

Histidine 81 lines the Zn(2+) pocket. The active site involves aspartate 83. Aspartate 143 is a binding site for Zn(2+). Glutamate 178 (proton acceptor) is an active-site residue. Positions 179, 201, and 383 each coordinate Zn(2+).

It belongs to the peptidase M20B family. As to quaternary structure, homodimer. The cofactor is Zn(2+).

The protein resides in the cytoplasm. The enzyme catalyses Release of the N-terminal residue from a tripeptide.. With respect to regulation, inhibited by EDTA, by the reducing agents dithiothreitol and 13-mercaptoethanol, and by the divalent cation Cu(2+). In terms of biological role, cleaves the N-terminal amino acid of tripeptides. Has a broad specificity for tripeptides with no clear preference for a particular tripeptide. Tripeptides with proline in the second position are an exception and are not hydrolyzed. Does not hydrolyze dipeptides, tetrapeptides, or oligopeptides. In Lactococcus lactis subsp. cremoris (Streptococcus cremoris), this protein is Peptidase T (pepT).